The primary structure comprises 492 residues: Glycerol kinase 1 (492 aa).

Residue Thr10 participates in ADP binding. Residues Thr10 and Ser11 each coordinate ATP. Thr10 is a sn-glycerol 3-phosphate binding site. Lys14 provides a ligand contact to ADP. Positions 80, 81, 132, and 241 each coordinate sn-glycerol 3-phosphate. 4 residues coordinate glycerol: Arg80, Glu81, Tyr132, and Asp241. Positions 263, 306, 407, and 411 each coordinate ADP. ATP contacts are provided by Thr263, Gly306, and Gly407.

Belongs to the FGGY kinase family.

It catalyses the reaction glycerol + ATP = sn-glycerol 3-phosphate + ADP + H(+). Its pathway is polyol metabolism; glycerol degradation via glycerol kinase pathway; sn-glycerol 3-phosphate from glycerol: step 1/1. Its activity is regulated as follows. Inhibited by fructose 1,6-bisphosphate (FBP). Functionally, key enzyme in the regulation of glycerol uptake and metabolism. Catalyzes the phosphorylation of glycerol to yield sn-glycerol 3-phosphate. This chain is Glycerol kinase 1, found in Thermotoga maritima (strain ATCC 43589 / DSM 3109 / JCM 10099 / NBRC 100826 / MSB8).